A 158-amino-acid chain; its full sequence is NKG2-F type II integral membrane protein (158 aa).

Residues 1-12 (MNKQRGTYSEVS) are compositionally biased toward polar residues. Residues 1–30 (MNKQRGTYSEVSLAQDPKRQQRKLKGNKSS) form a disordered region. Over 1 to 74 (MNKQRGTYSE…LPPPERLTAE (74 aa)) the chain is Cytoplasmic. Residues 75 to 95 (VLGIICIVLMATVLKTIVLIP) form a helical membrane-spanning segment. Residues 96–158 (CIGVLEQNNF…VLQRTLICFL (63 aa)) are Extracellular-facing.

In terms of assembly, can form disulfide-bonded heterodimer with CD94. As to expression, natural killer cells.

The protein resides in the membrane. In terms of biological role, may play a role as a receptor for the recognition of MHC class I HLA-E molecules by NK cells. The sequence is that of NKG2-F type II integral membrane protein (KLRC4) from Pan troglodytes (Chimpanzee).